Consider the following 357-residue polypeptide: Putative F-box protein At5g50220 (357 aa).

Positions 27 to 73 (IAEDIGIPIDLMVEILKKLPAKSLIKFQCVSKQWSSIIGSSRDFIDS) constitute an F-box domain.

The sequence is that of Putative F-box protein At5g50220 from Arabidopsis thaliana (Mouse-ear cress).